Consider the following 232-residue polypeptide: Orotidine 5'-phosphate decarboxylase (232 aa).

Substrate-binding positions include Asp11, Lys33, Asp60–Thr69, Thr120, Arg181, Gln190, Gly210, and Arg211. Lys62 acts as the Proton donor in catalysis.

Belongs to the OMP decarboxylase family. Type 1 subfamily. As to quaternary structure, homodimer.

It catalyses the reaction orotidine 5'-phosphate + H(+) = UMP + CO2. The protein operates within pyrimidine metabolism; UMP biosynthesis via de novo pathway; UMP from orotate: step 2/2. Functionally, catalyzes the decarboxylation of orotidine 5'-monophosphate (OMP) to uridine 5'-monophosphate (UMP). The sequence is that of Orotidine 5'-phosphate decarboxylase from Vibrio vulnificus (strain CMCP6).